The primary structure comprises 310 residues: Protein N-terminal asparagine amidohydrolase (310 aa).

Monomer.

It localises to the cytoplasm. The catalysed reaction is N-terminal L-asparaginyl-[protein] + H2O + H(+) = N-terminal L-aspartyl-[protein] + NH4(+). N-terminal asparagine deamidase that mediates deamidation of N-terminal asparagine residues to aspartate. Required for the ubiquitin-dependent turnover of intracellular proteins that initiate with Met-Asn. These proteins are acetylated on the retained initiator methionine and can subsequently be modified by the removal of N-acetyl methionine by acylaminoacid hydrolase (AAH). Conversion of the resulting N-terminal asparagine to aspartate by NTAN1/PNAD renders the protein susceptible to arginylation, polyubiquitination and degradation as specified by the N-end rule. This enzyme does not act on substrates with internal or C-terminal asparagines and does not act on glutamine residues in any position. This chain is Protein N-terminal asparagine amidohydrolase, found in Mus musculus (Mouse).